The chain runs to 548 residues: Chaperonin GroEL (548 aa).

ATP contacts are provided by residues 30-33 (TLGP), lysine 51, 87-91 (DGTTT), glycine 415, 479-481 (NAA), and aspartate 495. The segment at 525–548 (PKEDKTSDASSSPAGGMGGMGGMM) is disordered. Residues 539 to 548 (GGMGGMGGMM) are compositionally biased toward gly residues.

Belongs to the chaperonin (HSP60) family. In terms of assembly, forms a cylinder of 14 subunits composed of two heptameric rings stacked back-to-back. Interacts with the co-chaperonin GroES.

The protein resides in the cytoplasm. It carries out the reaction ATP + H2O + a folded polypeptide = ADP + phosphate + an unfolded polypeptide.. Functionally, together with its co-chaperonin GroES, plays an essential role in assisting protein folding. The GroEL-GroES system forms a nano-cage that allows encapsulation of the non-native substrate proteins and provides a physical environment optimized to promote and accelerate protein folding. This chain is Chaperonin GroEL, found in Buchnera aphidicola subsp. Rhopalosiphum padi.